Reading from the N-terminus, the 102-residue chain is MVPLILLILLFSKFSTFLRPVNHVLVTKYTAIVNTKWQTTPSIIDVTYTMHVFYMTIILILVRKQMQSIHAFLGSLCLPSHVLDFSIVRDILSWYFLETVAV.

Transmembrane regions (helical) follow at residues 1–21 (MVPL…LRPV), 42–62 (SIID…LILV), and 68–88 (SIHA…FSIV).

Its subcellular location is the membrane. This is an uncharacterized protein from Saccharomyces cerevisiae (strain ATCC 204508 / S288c) (Baker's yeast).